The primary structure comprises 393 residues: MANDFLFTSESVSEGHPDKVADQISDAILDAIFTQDPRSRVAAETLTNTGLVVLAGEITTNAHVDYIQVARDTIKRIGYDNTEYGIDYKGCAVLVAYDKQSNDIAQGVDHASDDHLNTGAGDQGLMFGYACDETPELMPAPIYYAHRLVERQAQLRKDGRLPFLRPDAKSQVTMRYVDGKPHSIDTVVLSTQHSPDQSETATKMKASFTEAIIEEIIKPVLPKEWLQDTKYLINPTGRFVIGGPQGDCGLTGRKIIVDTYGGACPHGGGAFSGKDPTKVDRSAAYAARYVAKNIVAAGLARQCQIQVAYAIGVARPMNITVYTEGTGVIPDDQIAQLVQEHFDLRPKGIIQMLDLLRPIYAKTAAYGHFGREEPEFTWERTDKAAALRAAAGL.

Residue histidine 16 coordinates ATP. Position 18 (aspartate 18) interacts with Mg(2+). Glutamate 44 is a binding site for K(+). L-methionine-binding residues include glutamate 57 and glutamine 100. A flexible loop region spans residues 100 to 110 (QSNDIAQGVDH). Residues 167–169 (DAK), 238–239 (RF), aspartate 247, 253–254 (RK), alanine 270, and lysine 274 each bind ATP. L-methionine is bound at residue aspartate 247. Lysine 278 lines the L-methionine pocket.

This sequence belongs to the AdoMet synthase family. Homotetramer; dimer of dimers. The cofactor is Mg(2+). Requires K(+) as cofactor.

It localises to the cytoplasm. It carries out the reaction L-methionine + ATP + H2O = S-adenosyl-L-methionine + phosphate + diphosphate. The protein operates within amino-acid biosynthesis; S-adenosyl-L-methionine biosynthesis; S-adenosyl-L-methionine from L-methionine: step 1/1. Functionally, catalyzes the formation of S-adenosylmethionine (AdoMet) from methionine and ATP. The overall synthetic reaction is composed of two sequential steps, AdoMet formation and the subsequent tripolyphosphate hydrolysis which occurs prior to release of AdoMet from the enzyme. This is S-adenosylmethionine synthase from Acidovorax ebreus (strain TPSY) (Diaphorobacter sp. (strain TPSY)).